Consider the following 74-residue polypeptide: Protein translocase subunit SecE (74 aa).

Over Met-1–Ala-36 the chain is Cytoplasmic. A helical transmembrane segment spans residues Val-37–Ile-62. The Extracellular segment spans residues Lys-63 to Val-74.

Belongs to the SecE/SEC61-gamma family. In terms of assembly, component of the Sec protein translocase complex. Heterotrimer consisting of alpha (SecY), beta (SecG) and gamma (SecE) subunits. The heterotrimers can form oligomers, although 1 heterotrimer is thought to be able to translocate proteins. Interacts with the ribosome. May interact with SecDF, and other proteins may be involved.

The protein resides in the cell membrane. Its function is as follows. Essential subunit of the protein translocation channel SecYEG. Clamps together the 2 halves of SecY. May contact the channel plug during translocation. This chain is Protein translocase subunit SecE, found in Methanocaldococcus jannaschii (strain ATCC 43067 / DSM 2661 / JAL-1 / JCM 10045 / NBRC 100440) (Methanococcus jannaschii).